The sequence spans 552 residues: HTH-type transcriptional regulator SgrR (552 aa).

The region spanning 1–116 is the HTH marR-type domain; the sequence is MPSGRLQQQF…LISHLGRSFR (116 aa). A DNA-binding region (H-T-H motif) is located at residues 26–49; the sequence is LNELADLLNCSRRHMRTLLNTMQA. Residues 163-493 are solute-binding; it reads ELEADIAHHW…RDWQDDAAQW (331 aa).

Its function is as follows. Activates the small RNA gene sgrS under glucose-phosphate stress conditions as well as yfdZ. Represses its own transcription under both stress and non-stress conditions. Might act as a sensor of the intracellular accumulation of phosphoglucose by binding these molecules in its C-terminal solute-binding domain. This is HTH-type transcriptional regulator SgrR from Salmonella typhi.